Consider the following 191-residue polypeptide: Ureidoglycolate lyase (191 aa).

This sequence belongs to the ureidoglycolate lyase family. In terms of assembly, homodimer.

The enzyme catalyses (S)-ureidoglycolate = urea + glyoxylate. The protein operates within nitrogen metabolism; (S)-allantoin degradation. Functionally, catalyzes the catabolism of the allantoin degradation intermediate (S)-ureidoglycolate, generating urea and glyoxylate. Involved in the utilization of allantoin as secondary nitrogen source when primary sources are limiting. The protein is Ureidoglycolate lyase of Schizosaccharomyces pombe (strain 972 / ATCC 24843) (Fission yeast).